The primary structure comprises 293 residues: MEQGTIRLKTGLAEMLKGGVIMDVTTPEQAKIAEEAGACAVMALERVPADIRAAGGVARMADPTIVKKIMEVATIPVMAKARIGHFVEARILESMGVDYIDESEVLTPADDKYHIDKRDFTVPFVCGCRNLGEALRRIAEGAAMIRTKGEPGTGNVVEAVRHCRQVMDEVRMLCALPEAEVPNFAKEMGAPLELCLLVRKEGRLPVVNFAAGGIATPADAAMMMHLGCDGVFVGSGIFKSGDPAKRARAIVQAVTNYKDFALLAEISRDLGEPMVGIEISTIPSGERMQERGW.

Asp23 contacts D-ribose 5-phosphate. Residue Lys80 is the Schiff-base intermediate with D-ribose 5-phosphate of the active site. Gly152 provides a ligand contact to D-ribose 5-phosphate. Arg164 lines the D-glyceraldehyde 3-phosphate pocket. Residues Gly213 and 234 to 235 (GS) contribute to the D-ribose 5-phosphate site.

It belongs to the PdxS/SNZ family. In terms of assembly, in the presence of PdxT, forms a dodecamer of heterodimers.

The catalysed reaction is aldehydo-D-ribose 5-phosphate + D-glyceraldehyde 3-phosphate + L-glutamine = pyridoxal 5'-phosphate + L-glutamate + phosphate + 3 H2O + H(+). The protein operates within cofactor biosynthesis; pyridoxal 5'-phosphate biosynthesis. Catalyzes the formation of pyridoxal 5'-phosphate from ribose 5-phosphate (RBP), glyceraldehyde 3-phosphate (G3P) and ammonia. The ammonia is provided by the PdxT subunit. Can also use ribulose 5-phosphate and dihydroxyacetone phosphate as substrates, resulting from enzyme-catalyzed isomerization of RBP and G3P, respectively. The chain is Pyridoxal 5'-phosphate synthase subunit PdxS from Desulfovibrio desulfuricans (strain ATCC 27774 / DSM 6949 / MB).